The primary structure comprises 498 residues: Ribulose bisphosphate carboxylase large chain (498 aa).

Residues 1–2 (MS) constitute a propeptide that is removed on maturation. At proline 3 the chain carries N-acetylproline. At lysine 14 the chain carries N6,N6,N6-trimethyllysine. Asparagine 123 and threonine 173 together coordinate substrate. The Proton acceptor role is filled by lysine 175. Residue lysine 177 participates in substrate binding. Positions 201, 203, and 204 each coordinate Mg(2+). Position 201 is an N6-carboxylysine (lysine 201). The Proton acceptor role is filled by histidine 294. The substrate site is built by arginine 295, histidine 327, and serine 379. The interval 471–498 (PVDTLDPNDKKQRDNEDTLADKLFGDKG) is disordered.

This sequence belongs to the RuBisCO large chain family. Type I subfamily. In terms of assembly, heterohexadecamer of 8 large chains and 8 small chains; disulfide-linked. The disulfide link is formed within the large subunit homodimers. Mg(2+) serves as cofactor. The disulfide bond which can form in the large chain dimeric partners within the hexadecamer appears to be associated with oxidative stress and protein turnover.

Its subcellular location is the plastid. It catalyses the reaction 2 (2R)-3-phosphoglycerate + 2 H(+) = D-ribulose 1,5-bisphosphate + CO2 + H2O. The catalysed reaction is D-ribulose 1,5-bisphosphate + O2 = 2-phosphoglycolate + (2R)-3-phosphoglycerate + 2 H(+). RuBisCO catalyzes two reactions: the carboxylation of D-ribulose 1,5-bisphosphate, the primary event in carbon dioxide fixation, as well as the oxidative fragmentation of the pentose substrate in the photorespiration process. Both reactions occur simultaneously and in competition at the same active site. The chain is Ribulose bisphosphate carboxylase large chain (rbcL) from Cuscuta reflexa (Southern Asian dodder).